The chain runs to 356 residues: S-adenosylmethionine:tRNA ribosyltransferase-isomerase (356 aa).

This sequence belongs to the QueA family. Monomer.

It localises to the cytoplasm. The catalysed reaction is 7-aminomethyl-7-carbaguanosine(34) in tRNA + S-adenosyl-L-methionine = epoxyqueuosine(34) in tRNA + adenine + L-methionine + 2 H(+). It participates in tRNA modification; tRNA-queuosine biosynthesis. Functionally, transfers and isomerizes the ribose moiety from AdoMet to the 7-aminomethyl group of 7-deazaguanine (preQ1-tRNA) to give epoxyqueuosine (oQ-tRNA). In Escherichia coli O8 (strain IAI1), this protein is S-adenosylmethionine:tRNA ribosyltransferase-isomerase.